The sequence spans 258 residues: uncharacterized protein (258 aa).

Residues 163-187 (GIVGAAGLMLMFADLNGIPGICLMG) traverse the membrane as a helical segment.

The protein localises to the membrane. This is an uncharacterized protein from Methanocaldococcus jannaschii (strain ATCC 43067 / DSM 2661 / JAL-1 / JCM 10045 / NBRC 100440) (Methanococcus jannaschii).